A 398-amino-acid chain; its full sequence is Methionine aminopeptidase 1A (398 aa).

Alanine 2 carries the N-acetylalanine modification. Residues 12 to 65 (TLSCARCEKPAHLQCPKCIDLKLPREQASFCTQECFKAAWSSHKSVHVKAQLSS) form a C6H2-type zinc finger. Positions 15, 18, 26, 29, 42, 46, 54, and 58 each coordinate Zn(2+). Position 214 (histidine 214) interacts with a protein. 3 residues coordinate Zn(2+): aspartate 231, aspartate 242, and histidine 305. Histidine 312 contributes to the a protein binding site. The Zn(2+) site is built by glutamate 338 and glutamate 369.

It belongs to the peptidase M24A family. Methionine aminopeptidase type 1 subfamily. Associates with the 60S ribosomal subunit of the 80S translational complex. Zn(2+) is required as a cofactor. It depends on Co(2+) as a cofactor. The cofactor is Mn(2+). Fe(2+) serves as cofactor. Ubiquitous.

It is found in the cytoplasm. The catalysed reaction is Release of N-terminal amino acids, preferentially methionine, from peptides and arylamides.. Cotranslationally removes the N-terminal methionine from nascent proteins. The N-terminal methionine is often cleaved when the second residue in the primary sequence is small and uncharged (Met-Ala-, Cys, Gly, Pro, Ser, Thr, or Val). This is Methionine aminopeptidase 1A (MAP1A) from Arabidopsis thaliana (Mouse-ear cress).